A 575-amino-acid polypeptide reads, in one-letter code: Sodium/hydrogen exchanger 8 (575 aa).

A run of 11 helical transmembrane segments spans residues 54–74 (MTIF…HLLI), 78–98 (LHFL…GAVI), 117–137 (PNMF…YSLH), 150–170 (LFAV…IYFL), 185–205 (FAFG…IFNA), 255–275 (LGYF…TGLI), 305–325 (GLAE…GIVM), 348–368 (VAFL…FSFP), 373–393 (ISFV…NIFP), 411–431 (MFIM…SLHL), and 445–465 (TTII…MPLI). Thr-504 carries the post-translational modification Phosphothreonine. Residues Ser-565 and Ser-567 each carry the phosphoserine modification.

It belongs to the monovalent cation:proton antiporter 1 (CPA1) transporter (TC 2.A.36) family. Intestine and kidneys.

Its subcellular location is the golgi apparatus membrane. It is found in the golgi apparatus. The protein resides in the trans-Golgi network membrane. The protein localises to the endosome. It localises to the multivesicular body membrane. Its subcellular location is the apical cell membrane. It is found in the cytoplasmic vesicle. The protein resides in the secretory vesicle. The protein localises to the acrosome. It catalyses the reaction Na(+)(in) + H(+)(out) = Na(+)(out) + H(+)(in). With respect to regulation, expression and activity are regulated by acid media by increasing the rate of trafficking to the apical membrane. Inhibited by HOE694 and S3226. Its function is as follows. Na(+)/H(+) antiporter. Mediates the electoneutral exchange of intracellular H(+) ions for extracellular Na(+) in 1:1 stoichiometry. Acts as an Na(+)/H(+) exchanger in the trans-Golgi. Contributes to the regulation of pH regulation of Golgi apparatus, and consequently, in protein trafficking and endosomal morphology. In germ cells, plays a crucial role in acrosome biogenesis and sperm development, probably by playing a role in the fusion of the Golgi-derived vesicles that form the acrosomal cap. Can also be active at the cell surface of specialized cells. In the small intestine, at the cell membrane, plays a major physiological role in transepithelial absorption of Na(+) and regulates intracellular pH homeostasis of intestinal epithelial cells. Acts as an important regulator of mucosal integrity in the intestine and in the stomach, could mediate the pH fluctuation necessary for mucin exocytosis or assist membrane trafficking of other proteins. Plays a role in photoreceptor survival and in the maintenance of intracellular pH homeostasis in retinal pigment epithelium (RPE cells). The chain is Sodium/hydrogen exchanger 8 (Slc9a8) from Rattus norvegicus (Rat).